The primary structure comprises 379 residues: Acyl-CoA dehydrogenase (379 aa).

It belongs to the acyl-CoA dehydrogenase family. The cofactor is FAD.

The catalysed reaction is a 2,3-saturated acyl-CoA + A = a 2,3-dehydroacyl-CoA + AH2. In Bacillus subtilis (strain 168), this protein is Acyl-CoA dehydrogenase (mmgC).